The following is a 27-amino-acid chain: Nucleoside diphosphate kinase 2 (27 aa).

Residue Lys-3 coordinates ATP.

This sequence belongs to the NDK family. It depends on Mg(2+) as a cofactor.

It carries out the reaction a 2'-deoxyribonucleoside 5'-diphosphate + ATP = a 2'-deoxyribonucleoside 5'-triphosphate + ADP. The catalysed reaction is a ribonucleoside 5'-diphosphate + ATP = a ribonucleoside 5'-triphosphate + ADP. In terms of biological role, major role in the synthesis of nucleoside triphosphates other than ATP. The ATP gamma phosphate is transferred to the NDP beta phosphate via a ping-pong mechanism, using a phosphorylated active-site intermediate. This is Nucleoside diphosphate kinase 2 from Pseudotsuga menziesii (Douglas-fir).